We begin with the raw amino-acid sequence, 309 residues long: Protein FdhE homolog (309 aa).

The protein belongs to the FdhE family.

It localises to the cytoplasm. In terms of biological role, necessary for formate dehydrogenase activity. The chain is Protein FdhE homolog from Yersinia enterocolitica serotype O:8 / biotype 1B (strain NCTC 13174 / 8081).